The sequence spans 105 residues: Small ribosomal subunit protein uS10 (105 aa).

Belongs to the universal ribosomal protein uS10 family. In terms of assembly, part of the 30S ribosomal subunit.

Functionally, involved in the binding of tRNA to the ribosomes. The protein is Small ribosomal subunit protein uS10 of Acaryochloris marina (strain MBIC 11017).